Consider the following 202-residue polypeptide: Recoverin (202 aa).

Residue G2 is the site of N-myristoyl glycine attachment. EF-hand domains are found at residues 24-59 (TEEE…FFPE), 61-96 (DPKA…TSAG), 97-132 (KTNQ…IFKM), and 147-182 (TPEK…NKEI). C39 bears the Cysteine sulfenic acid (-SOH) mark. Ca(2+)-binding residues include D74, N76, D78, T80, E85, D110, D112, N114, T116, and E121. Residues 189–192 (EPQK) form an interaction with GRK1 region. A modulates EF-hand 3 domain calcium binding affinity region spans residues 191–202 (QKVKEKLKEKKL).

Belongs to the recoverin family. As to quaternary structure, homodimer; disulfide-linked. Homodimerization is caused by prolonged intense illumination. May form a complex composed of RHO, GRK1 and RCVRN in a Ca(2+)-dependent manner; RCVRN prevents the interaction between GRK1 and RHO. Interacts (via C-terminus) with GRK1 (via N-terminus); the interaction is Ca(2+)-dependent. In terms of processing, the N-terminal glycine is linked to one of four different types of acyl groups. The most abundant is myristoleate (14:1), but 14:0, 14:2, and 12:0 acyl residues are also present. The Ca(2+) induced exposure of the myristoyl group, known as the calcium-myristoyl switch, promotes RCVRN binding to the photoreceptor cell membranes only when intracellular Ca(2+) concentration is high. Oxidation on Cys-39 occurs in response to prolonged intense illumination and results in the formation of disulfide homodimers, and to a lesser extent disulfide-linked heterodimers. In terms of tissue distribution, expressed in the retina (at protein level). Expressed in the pineal gland (at protein level).

It is found in the photoreceptor inner segment. Its subcellular location is the cell projection. The protein localises to the cilium. It localises to the photoreceptor outer segment. The protein resides in the photoreceptor outer segment membrane. It is found in the perikaryon. Acts as a calcium sensor and regulates phototransduction of cone and rod photoreceptor cells. Modulates light sensitivity of cone photoreceptor in dark and dim conditions. In response to high Ca(2+) levels induced by low light levels, prolongs RHO/rhodopsin activation in rod photoreceptor cells by binding to and inhibiting GRK1-mediated phosphorylation of RHO/rhodopsin. Plays a role in scotopic vision/enhances vision in dim light by enhancing signal transfer between rod photoreceptors and rod bipolar cells. Improves rod photoreceptor sensitivity in dim light and mediates response of rod photoreceptors to facilitate detection of change and motion in bright light. In Bos taurus (Bovine), this protein is Recoverin (RCVRN).